A 247-amino-acid polypeptide reads, in one-letter code: Carboxy-S-adenosyl-L-methionine synthase (247 aa).

Residues tyrosine 40, 65-67 (GSS), 90-91 (DN), 122-123 (DI), asparagine 137, and arginine 204 each bind S-adenosyl-L-methionine.

The protein belongs to the class I-like SAM-binding methyltransferase superfamily. Cx-SAM synthase family. Homodimer.

It catalyses the reaction prephenate + S-adenosyl-L-methionine = carboxy-S-adenosyl-L-methionine + 3-phenylpyruvate + H2O. In terms of biological role, catalyzes the conversion of S-adenosyl-L-methionine (SAM) to carboxy-S-adenosyl-L-methionine (Cx-SAM). The polypeptide is Carboxy-S-adenosyl-L-methionine synthase (Pseudomonas syringae pv. syringae (strain B728a)).